A 448-amino-acid polypeptide reads, in one-letter code: Delta(14)-sterol reductase ERG24 (448 aa).

Transmembrane regions (helical) follow at residues 18 to 38, 75 to 95, 108 to 128, 157 to 177, 251 to 271, 279 to 299, and 318 to 338; these read ISGA…FYLL, CWSA…LLPG, VLNY…LLLA, IIIC…ISFI, VTDS…DGVL, MIDI…LAWV, and NLGW…FYIF. Residues lysine 345, arginine 349, leucine 368, tryptophan 373, and 380–381 contribute to the NADP(+) site; that span reads NY. Residues 394–414 form a helical membrane-spanning segment; the sequence is PTGFQTPLTYFYVIYFASLLI. NADP(+) is bound by residues aspartate 420, 424 to 428, and tyrosine 435; that span reads CRAKY.

This sequence belongs to the ERG4/ERG24 family.

It is found in the endoplasmic reticulum membrane. The catalysed reaction is 4,4-dimethyl-5alpha-cholesta-8,24-dien-3beta-ol + NADP(+) = 4,4-dimethyl-5alpha-cholesta-8,14,24-trien-3beta-ol + NADPH + H(+). The protein operates within steroid biosynthesis; zymosterol biosynthesis; zymosterol from lanosterol: step 2/6. In terms of biological role, C-14 sterol reductase; part of the third module of ergosterol biosynthesis pathway that includes the late steps of the pathway. ERG24 reduces the C14=C15 double bond of 4,4-dimethyl-cholesta-8,14,24-trienol to produce 4,4-dimethyl-cholesta-8,24-dienol. The third module or late pathway involves the ergosterol synthesis itself through consecutive reactions that mainly occur in the endoplasmic reticulum (ER) membrane. Firstly, the squalene synthase ERG9 catalyzes the condensation of 2 farnesyl pyrophosphate moieties to form squalene, which is the precursor of all steroids. Squalene synthase is crucial for balancing the incorporation of farnesyl diphosphate (FPP) into sterol and nonsterol isoprene synthesis. Secondly, the squalene epoxidase ERG1 catalyzes the stereospecific oxidation of squalene to (S)-2,3-epoxysqualene, which is considered to be a rate-limiting enzyme in steroid biosynthesis. Then, the lanosterol synthase ERG7 catalyzes the cyclization of (S)-2,3 oxidosqualene to lanosterol, a reaction that forms the sterol core. In the next steps, lanosterol is transformed to zymosterol through a complex process involving various demethylation, reduction and desaturation reactions. The lanosterol 14-alpha-demethylase ERG11 (also known as CYP51) catalyzes C14-demethylation of lanosterol to produce 4,4'-dimethyl cholesta-8,14,24-triene-3-beta-ol, which is critical for ergosterol biosynthesis. The C-14 reductase ERG24 reduces the C14=C15 double bond of 4,4-dimethyl-cholesta-8,14,24-trienol to produce 4,4-dimethyl-cholesta-8,24-dienol. 4,4-dimethyl-cholesta-8,24-dienol is substrate of the C-4 demethylation complex ERG25-ERG26-ERG27 in which ERG25 catalyzes the three-step monooxygenation required for the demethylation of 4,4-dimethyl and 4alpha-methylsterols, ERG26 catalyzes the oxidative decarboxylation that results in a reduction of the 3-beta-hydroxy group at the C-3 carbon to an oxo group, and ERG27 is responsible for the reduction of the keto group on the C-3. ERG28 has a role as a scaffold to help anchor ERG25, ERG26 and ERG27 to the endoplasmic reticulum and ERG29 regulates the activity of the iron-containing C4-methylsterol oxidase ERG25. Then, the sterol 24-C-methyltransferase ERG6 catalyzes the methyl transfer from S-adenosyl-methionine to the C-24 of zymosterol to form fecosterol. The C-8 sterol isomerase ERG2 catalyzes the reaction which results in unsaturation at C-7 in the B ring of sterols and thus converts fecosterol to episterol. The sterol-C5-desaturase ERG3 then catalyzes the introduction of a C-5 double bond in the B ring to produce 5-dehydroepisterol. The C-22 sterol desaturase ERG5 further converts 5-dehydroepisterol into ergosta-5,7,22,24(28)-tetraen-3beta-ol by forming the C-22(23) double bond in the sterol side chain. Finally, ergosta-5,7,22,24(28)-tetraen-3beta-ol is substrate of the C-24(28) sterol reductase ERG4 to produce ergosterol. In Candida albicans (strain SC5314 / ATCC MYA-2876) (Yeast), this protein is Delta(14)-sterol reductase ERG24.